Reading from the N-terminus, the 118-residue chain is SPbeta prophage-derived uncharacterized protein YolB (118 aa).

The protein is SPbeta prophage-derived uncharacterized protein YolB (yolB) of Bacillus subtilis (strain 168).